Reading from the N-terminus, the 115-residue chain is Anamorsin homolog 1 (115 aa).

The disordered stretch occupies residues 30–115 (VKEATKGEDC…KVKLNLTDDI (86 aa)). 4 residues coordinate [2Fe-2S] cluster: C39, C46, C49, and C51. Positions 39-51 (CTTRRRACKNCTC) are fe-S binding site A. Residues C77, C80, C88, and C91 each coordinate [4Fe-4S] cluster. 2 consecutive short sequence motifs (cx2C motif) follow at residues 77-80 (CGNC) and 88-91 (CATC). Residues 77–91 (CGNCAKGDAFRCATC) are fe-S binding site B.

The protein belongs to the anamorsin family. As to quaternary structure, monomer. [2Fe-2S] cluster is required as a cofactor. The cofactor is [4Fe-4S] cluster.

The protein localises to the cytoplasm. It is found in the mitochondrion intermembrane space. Its function is as follows. Component of the cytosolic iron-sulfur (Fe-S) protein assembly (CIA) machinery. Required for the maturation of extramitochondrial Fe-S proteins. Part of an electron transfer chain functioning in an early step of cytosolic Fe-S biogenesis, facilitating the de novo assembly of a [4Fe-4S] cluster on the cytosolic Fe-S scaffold complex. Electrons are transferred from NADPH via a FAD- and FMN-containing diflavin oxidoreductase. Together with the diflavin oxidoreductase, also required for the assembly of the diferric tyrosyl radical cofactor of ribonucleotide reductase (RNR), probably by providing electrons for reduction during radical cofactor maturation in the catalytic small subunit. This chain is Anamorsin homolog 1, found in Trypanosoma cruzi (strain CL Brener).